The primary structure comprises 215 residues: Large ribosomal subunit protein uL3 (215 aa).

Gln156 is modified (N5-methylglutamine).

This sequence belongs to the universal ribosomal protein uL3 family. As to quaternary structure, part of the 50S ribosomal subunit. Forms a cluster with proteins L14 and L19. Post-translationally, methylated by PrmB.

Functionally, one of the primary rRNA binding proteins, it binds directly near the 3'-end of the 23S rRNA, where it nucleates assembly of the 50S subunit. This chain is Large ribosomal subunit protein uL3, found in Xylella fastidiosa (strain 9a5c).